A 155-amino-acid polypeptide reads, in one-letter code: MTKREEYELKAEQLLTPIMEENNFELVDVEYVKEVGNWYLRAYIDKEGGITVDDCEVVSRRFSDLLDEKDFIPDAYILEVSSPGLGRQLKKDKDFKRSLGEEVEIKLYKAINKQKDFEGILTDFDQEKLIIEQADGTTMEFARADIAMVRLALDF.

It belongs to the RimP family.

It localises to the cytoplasm. Its function is as follows. Required for maturation of 30S ribosomal subunits. In Lachnoclostridium phytofermentans (strain ATCC 700394 / DSM 18823 / ISDg) (Clostridium phytofermentans), this protein is Ribosome maturation factor RimP.